The primary structure comprises 357 residues: Cobalt-precorrin-5B C(1)-methyltransferase (357 aa).

This sequence belongs to the CbiD family.

It catalyses the reaction Co-precorrin-5B + S-adenosyl-L-methionine = Co-precorrin-6A + S-adenosyl-L-homocysteine. It functions in the pathway cofactor biosynthesis; adenosylcobalamin biosynthesis; cob(II)yrinate a,c-diamide from sirohydrochlorin (anaerobic route): step 6/10. Catalyzes the methylation of C-1 in cobalt-precorrin-5B to form cobalt-precorrin-6A. In Gloeobacter violaceus (strain ATCC 29082 / PCC 7421), this protein is Cobalt-precorrin-5B C(1)-methyltransferase.